The sequence spans 768 residues: Solute carrier family 45 member 4 (768 aa).

The disordered stretch occupies residues 1–32 (MKMAPQNADPESMQVQELSVPLPDPQKAGGAE). Transmembrane regions (helical) follow at residues 63–83 (EFCY…IGLP), 86–106 (YYSL…PLIG), 123–143 (ILAL…GSAI), 155–175 (PIGI…ADAT), 196–216 (LNIH…LGGL), and 233–253 (VLFF…LFSI). Disordered stretches follow at residues 259–284 (SPQQ…PAFP) and 379–419 (NEAK…RHAF). Phosphoserine occurs at positions 424 and 454. Positions 460–489 (DMQKRQRQHRHRNQSGATTSSGDTESEEGE) are disordered. Over residues 473–482 (QSGATTSSGD) the composition is skewed to low complexity. Ser485 carries the phosphoserine modification. 6 consecutive transmembrane segments (helical) span residues 518–538 (TWFS…QVIF), 560–580 (MGCW…ALLQ), 592–612 (VIYV…AMFP), 614–634 (VYVA…ISYC), 666–686 (ILSC…GGVV), and 695–715 (IPMV…FLVI). The segment at 726–768 (EQKGLSSPLAGEGRAGGNSEKPTVLKLTRKEGLQGPVETESVV) is disordered. Ser732 bears the Phosphoserine mark.

The protein belongs to the glycoside-pentoside-hexuronide (GPH) cation symporter transporter (TC 2.A.2) family.

It is found in the membrane. It carries out the reaction sucrose(out) + H(+)(out) = sucrose(in) + H(+)(in). Functionally, proton-associated sucrose transporter. May be able to transport also glucose and fructose. This Homo sapiens (Human) protein is Solute carrier family 45 member 4.